The chain runs to 140 residues: RxLR effector protein CRE2 (140 aa).

Residues Met-1–Ser-24 form the signal peptide. The short motif at Arg-56–Arg-72 is the RxLR-dEER element.

This sequence belongs to the RxLR effector family.

It is found in the secreted. The protein localises to the host cell. In terms of biological role, effector that is involved in host plant infection. Contributes to virulence during the early infection stage, by inhibiting plant defense responses induced by both PAMP-triggered immunity (PTI) and effector-triggered immunity (ETI). This chain is RxLR effector protein CRE2, found in Phytophthora infestans (strain T30-4) (Potato late blight agent).